The sequence spans 278 residues: 3-methyl-2-oxobutanoate hydroxymethyltransferase (278 aa).

Residues Asp-49 and Asp-88 each contribute to the Mg(2+) site. 3-methyl-2-oxobutanoate is bound by residues 49-50 (DS), Asp-88, and Lys-118. Residue Glu-120 coordinates Mg(2+). Catalysis depends on Glu-186, which acts as the Proton acceptor.

The protein belongs to the PanB family. In terms of assembly, homodecamer; pentamer of dimers. Mg(2+) is required as a cofactor.

It is found in the cytoplasm. The enzyme catalyses 3-methyl-2-oxobutanoate + (6R)-5,10-methylene-5,6,7,8-tetrahydrofolate + H2O = 2-dehydropantoate + (6S)-5,6,7,8-tetrahydrofolate. The protein operates within cofactor biosynthesis; (R)-pantothenate biosynthesis; (R)-pantoate from 3-methyl-2-oxobutanoate: step 1/2. Its function is as follows. Catalyzes the reversible reaction in which hydroxymethyl group from 5,10-methylenetetrahydrofolate is transferred onto alpha-ketoisovalerate to form ketopantoate. This is 3-methyl-2-oxobutanoate hydroxymethyltransferase from Bordetella parapertussis (strain 12822 / ATCC BAA-587 / NCTC 13253).